Reading from the N-terminus, the 288-residue chain is Light-independent protochlorophyllide reductase iron-sulfur ATP-binding protein (288 aa).

Residues 10-15 and lysine 39 each bind ATP; that span reads GIGKST. Serine 14 serves as a coordination point for Mg(2+). The [4Fe-4S] cluster site is built by cysteine 95 and cysteine 129. Residues 180 to 181 and 204 to 206 contribute to the ATP site; these read NR and PLL.

The protein belongs to the NifH/BchL/ChlL family. As to quaternary structure, homodimer. Protochlorophyllide reductase is composed of three subunits; ChlL, ChlN and ChlB. [4Fe-4S] cluster is required as a cofactor.

Its subcellular location is the plastid. It localises to the chloroplast. The catalysed reaction is chlorophyllide a + oxidized 2[4Fe-4S]-[ferredoxin] + 2 ADP + 2 phosphate = protochlorophyllide a + reduced 2[4Fe-4S]-[ferredoxin] + 2 ATP + 2 H2O. Its pathway is porphyrin-containing compound metabolism; chlorophyll biosynthesis (light-independent). Component of the dark-operative protochlorophyllide reductase (DPOR) that uses Mg-ATP and reduced ferredoxin to reduce ring D of protochlorophyllide (Pchlide) to form chlorophyllide a (Chlide). This reaction is light-independent. The L component serves as a unique electron donor to the NB-component of the complex, and binds Mg-ATP. The chain is Light-independent protochlorophyllide reductase iron-sulfur ATP-binding protein from Stigeoclonium helveticum (Green alga).